A 361-amino-acid chain; its full sequence is Chorismate synthase (361 aa).

2 residues coordinate NADP(+): Arg-48 and Arg-54. FMN contacts are provided by residues 125–127, 238–239, Gly-278, 293–297, and Arg-319; these read RSS, NA, and KPTSS.

The protein belongs to the chorismate synthase family. In terms of assembly, homotetramer. It depends on FMNH2 as a cofactor.

It carries out the reaction 5-O-(1-carboxyvinyl)-3-phosphoshikimate = chorismate + phosphate. It participates in metabolic intermediate biosynthesis; chorismate biosynthesis; chorismate from D-erythrose 4-phosphate and phosphoenolpyruvate: step 7/7. Functionally, catalyzes the anti-1,4-elimination of the C-3 phosphate and the C-6 proR hydrogen from 5-enolpyruvylshikimate-3-phosphate (EPSP) to yield chorismate, which is the branch point compound that serves as the starting substrate for the three terminal pathways of aromatic amino acid biosynthesis. This reaction introduces a second double bond into the aromatic ring system. The sequence is that of Chorismate synthase from Salmonella typhi.